The following is a 665-amino-acid chain: Secreted LysM effector Lys3 (665 aa).

The signal sequence occupies residues 1–19 (MLWLTVSLTGFALLGVVAA). 2 N-linked (GlcNAc...) asparagine glycosylation sites follow: Asn-43 and Asn-153. LysM domains lie at 166–211 (RTYT…TLCL), 216–264 (TLRK…YICI), and 303–349 (KWYV…AYCV). A glycan (N-linked (GlcNAc...) asparagine) is linked at Asn-234. N-linked (GlcNAc...) asparagine glycosylation is present at Asn-398. One can recognise a LysM 4 domain in the interval 409–454 (SWSDAAKLNSCSFIAHINGVTVSQLLQWNPSLSKDSCSLSRELYYC). Asn-531 carries N-linked (GlcNAc...) asparagine glycosylation. The disordered stretch occupies residues 585 to 610 (SSVSMTNSAPATATSTGGPPAPTQDG). Low complexity predominate over residues 592–602 (SAPATATSTGG). N-linked (GlcNAc...) asparagine glycosylation occurs at Asn-614. A LysM 5 domain is found at 617–663 (KWHVVESGDGCWAIYTKYGITSDQLFEWNTKISKDCSNIWLGYAVCV).

This sequence belongs to the secreted LysM effector family.

In terms of biological role, might have a role in sequestration of chitin oligosaccharides (breakdown products of fungal cell walls that are released during invasion and act as triggers of host immunity) to dampen host defense. The sequence is that of Secreted LysM effector Lys3 from Pochonia chlamydosporia (strain 123) (Metacordyceps chlamydosporia).